Here is a 39-residue protein sequence, read N- to C-terminus: Cytochrome b559 subunit beta (39 aa).

The chain crosses the membrane as a helical span at residues W14–S30. H18 provides a ligand contact to heme.

It belongs to the PsbE/PsbF family. In terms of assembly, heterodimer of an alpha subunit and a beta subunit. PSII is composed of 1 copy each of membrane proteins PsbA, PsbB, PsbC, PsbD, PsbE, PsbF, PsbH, PsbI, PsbJ, PsbK, PsbL, PsbM, PsbT, PsbX, PsbY, PsbZ, Psb30/Ycf12, at least 3 peripheral proteins of the oxygen-evolving complex and a large number of cofactors. It forms dimeric complexes. Heme b serves as cofactor.

The protein resides in the plastid. It is found in the chloroplast thylakoid membrane. Its function is as follows. This b-type cytochrome is tightly associated with the reaction center of photosystem II (PSII). PSII is a light-driven water:plastoquinone oxidoreductase that uses light energy to abstract electrons from H(2)O, generating O(2) and a proton gradient subsequently used for ATP formation. It consists of a core antenna complex that captures photons, and an electron transfer chain that converts photonic excitation into a charge separation. The protein is Cytochrome b559 subunit beta of Muilla maritima (Sea muilla).